The sequence spans 131 residues: Profilin-5 (131 aa).

A disulfide bond links Cys13 and Cys115. The short motif at 81–97 (AVIRGKKGAGGITVKKT) is the Involved in PIP2 interaction element. A Phosphothreonine modification is found at Thr111.

Belongs to the profilin family. As to quaternary structure, occurs in many kinds of cells as a complex with monomeric actin in a 1:1 ratio. Post-translationally, phosphorylated by MAP kinases.

It localises to the cytoplasm. The protein localises to the cytoskeleton. Its function is as follows. Binds to actin and affects the structure of the cytoskeleton. At high concentrations, profilin prevents the polymerization of actin, whereas it enhances it at low concentrations. This Corylus avellana (European hazel) protein is Profilin-5.